Reading from the N-terminus, the 474-residue chain is MAIISEDDFRHTSNSTYRTASSSLRADQEALLEKLLDRPPPSLQRPEDRFNGTYIIFFSLGIGGLLPWNFFVTAQEYWIFKLSNCSSPAAGEEPKDSDILNYFESYLAVASTVPSVLCLALNFLLVNRVPIRVRVLASLTVMLAIFIVMTVLVKVDTSSWTHSFFTITITCMAILSGTSTIFNSSVFGMTGSFPMRNSQALISGGAMGGTLSAVASLVDLAVASDVTDSTLAFFLTADIFLALCIGLYLLLPRLDYARYYMKPVWPTVFSGEEQLPQDSPSPTSVAPGSSDPQTPPLGPILKKTTGLGFCIIYLFFITSLIFPAICTNIESLSKGSGSPWSTKFFVPLTTFLLYNFADLCGRQVTAWIQVPGPRSKALPGLALLRTCFVPLFVFCNYQPRGHLHTVLFQSDVYPVLFTSLLGLSNGYLSTLALIYGPKIVPRELAEATGVVMTFYMGLGLVLGSACSALLVHLI.

Residues 1 to 53 are Cytoplasmic-facing; it reads MAIISEDDFRHTSNSTYRTASSSLRADQEALLEKLLDRPPPSLQRPEDRFNGT. Residues Ser21 and Ser23 each carry the phosphoserine modification. The Dileucine internalization motif motif lies at 31-32; it reads LL. The helical transmembrane segment at 54-74 threads the bilayer; the sequence is YIIFFSLGIGGLLPWNFFVTA. Residues 75–105 are Extracellular-facing; sequence QEYWIFKLSNCSSPAAGEEPKDSDILNYFES. N-linked (GlcNAc...) asparagine glycosylation is present at Asn84. Residues 106–126 traverse the membrane as a helical segment; it reads YLAVASTVPSVLCLALNFLLV. The Cytoplasmic portion of the chain corresponds to 127 to 134; the sequence is NRVPIRVR. Residues 135 to 155 form a helical membrane-spanning segment; it reads VLASLTVMLAIFIVMTVLVKV. Over 156–161 the chain is Extracellular; the sequence is DTSSWT. The chain crosses the membrane as a helical span at residues 162 to 182; that stretch reads HSFFTITITCMAILSGTSTIF. Over 183 to 201 the chain is Cytoplasmic; sequence NSSVFGMTGSFPMRNSQAL. The helical transmembrane segment at 202–222 threads the bilayer; it reads ISGGAMGGTLSAVASLVDLAV. At 223–230 the chain is on the extracellular side; it reads ASDVTDST. A helical transmembrane segment spans residues 231-251; it reads LAFFLTADIFLALCIGLYLLL. Residues 252–305 lie on the Cytoplasmic side of the membrane; it reads PRLDYARYYMKPVWPTVFSGEEQLPQDSPSPTSVAPGSSDPQTPPLGPILKKTT. The tract at residues 272–294 is disordered; that stretch reads EEQLPQDSPSPTSVAPGSSDPQT. The span at 276–292 shows a compositional bias: polar residues; it reads PQDSPSPTSVAPGSSDP. The chain crosses the membrane as a helical span at residues 306 to 326; the sequence is GLGFCIIYLFFITSLIFPAIC. Residues 327 to 339 are Extracellular-facing; the sequence is TNIESLSKGSGSP. The chain crosses the membrane as a helical span at residues 340 to 357; that stretch reads WSTKFFVPLTTFLLYNFA. Residues 358-376 are Cytoplasmic-facing; sequence DLCGRQVTAWIQVPGPRSK. The helical transmembrane segment at 377-397 threads the bilayer; it reads ALPGLALLRTCFVPLFVFCNY. Topologically, residues 398 to 414 are extracellular; that stretch reads QPRGHLHTVLFQSDVYP. Residues 415 to 435 traverse the membrane as a helical segment; it reads VLFTSLLGLSNGYLSTLALIY. The Cytoplasmic segment spans residues 436–453; sequence GPKIVPRELAEATGVVMT. The helical transmembrane segment at 454–474 threads the bilayer; it reads FYMGLGLVLGSACSALLVHLI.

It belongs to the SLC29A/ENT transporter (TC 2.A.57) family.

Its subcellular location is the lysosome membrane. It is found in the late endosome membrane. It localises to the mitochondrion membrane. The protein resides in the cell membrane. It carries out the reaction adenosine(in) = adenosine(out). The catalysed reaction is guanosine(in) = guanosine(out). The enzyme catalyses inosine(in) = inosine(out). It catalyses the reaction uridine(out) = uridine(in). It carries out the reaction cytidine(in) = cytidine(out). The catalysed reaction is thymidine(in) = thymidine(out). The enzyme catalyses 2'-deoxyadenosine(in) = 2'-deoxyadenosine(out). It catalyses the reaction 2'-deoxycytidine(in) = 2'-deoxycytidine(out). It carries out the reaction guanine(out) = guanine(in). The catalysed reaction is uracil(in) = uracil(out). The enzyme catalyses (R)-noradrenaline(out) = (R)-noradrenaline(in). It catalyses the reaction dopamine(out) = dopamine(in). It carries out the reaction serotonin(out) = serotonin(in). The catalysed reaction is tyramine(in) = tyramine(out). The enzyme catalyses ATP(in) = ATP(out). Uniporter that mediates the facilitative transport of nucleoside across lysosomal and mitochondrial membranes. Functions as a non-electrogenic Na(+)-independent transporter. Substrate transport is pH-dependent and enhanced under acidic condition, probably reflecting the location of the transporter in acidic intracellular compartments. Proton is not a cotransporting ion but most likely change the ionization state of the transporter which dictates transport-permissible/impermissible conformation for nucleoside translocation. May direct the nucleoside transport from lysosomes to cytosol or cytosol to mitochondria to facilitate the fundamental function of salvage synthesis of nucleic acids. Involved in the transport of nucleosides (adenosine, guanosine, uridine, thymidine, cytidine and inosine) and deoxynucleosides (deoxyadenosine, deoxycytidine). Also mediates transport of purine nucleobases (adenine, guanine) and pyrimidine nucleobases (uracil). Also able to transport monoamine neurotransmitters dopamine, serotonin, noradrenaline and tyramine. Capable of transporting ATP. Mediates nucleoside export from lysosomes in macrophages, which regulates macrophage functions and numbers. The protein is Equilibrative nucleoside transporter 3 (SLC29A3) of Bos taurus (Bovine).